Here is a 245-residue protein sequence, read N- to C-terminus: Protein DEHYDRATION-INDUCED 19 homolog 4 (245 aa).

It belongs to the Di19 family.

This chain is Protein DEHYDRATION-INDUCED 19 homolog 4 (DI19-4), found in Oryza sativa subsp. japonica (Rice).